Consider the following 874-residue polypeptide: Rho GTPase-activating protein 42 (874 aa).

The BAR domain maps to 7-262; sequence EFSDSYLDSP…MKSANQDYRP (256 aa). Residues 225-261 adopt a coiled-coil conformation; it reads KQQLQFNLQNTRNNFESTRQEVERLMQRMKSANQDYR. In terms of domain architecture, PH spans 265–374; the sequence is QWTMEGYLYV…WLEAMDGKEP (110 aa). A Phosphotyrosine modification is found at Tyr-376. Residues 376 to 572 enclose the Rho-GAP domain; it reads YTLPAIISKK…ILIEHYEKIF (197 aa). A disordered region spans residues 575–720; the sequence is APDPSIPLPQ…GDVSPPIDLV (146 aa). Positions 620-650 are enriched in low complexity; that stretch reads DSYSSSPDSTPMGSIESLSSHSSEQNSTTKS. The segment covering 667–686 has biased composition (polar residues); the sequence is TPSSSNGQKSLGLWTTSPES. Ser-683 carries the post-translational modification Phosphoserine. The segment covering 687–697 has biased composition (basic and acidic residues); the sequence is SSREDATKTDA. The span at 700–711 shows a compositional bias: polar residues; the sequence is DCQSVASVTSPG. A phosphoserine mark is found at Ser-740, Ser-753, Ser-756, and Ser-811. A compositionally biased stretch (polar residues) spans 749–762; the sequence is SYSGSIQSLTSVGS. The segment at 749–777 is disordered; that stretch reads SYSGSIQSLTSVGSKETPKASPNPDLPPK. The region spanning 816–874 is the SH3 domain; the sequence is SSGRQAKAMYSCKAEHSHELSFPQGAIFSNVYPSVEPGWLKATYEGKTGLVPENYVVFL. Phosphotyrosine is present on Tyr-870.

In terms of tissue distribution, highly and selectively expressed in smooth muscle cells.

May influence blood pressure by functioning as a GTPase-activating protein for RHOA in vascular smooth muscle. In Homo sapiens (Human), this protein is Rho GTPase-activating protein 42.